Reading from the N-terminus, the 190-residue chain is Secreted isochorismatase effector Isc1 (190 aa).

Residues Asp-26, Lys-100, and Cys-133 contribute to the active site.

Belongs to the isochorismatase family.

It localises to the secreted. It is found in the host cytoplasm. The protein resides in the host nucleus. The enzyme catalyses isochorismate + H2O = (2S,3S)-2,3-dihydroxy-2,3-dihydrobenzoate + pyruvate. Secreted isochorismatase required for full virulence of V.dahliae. Suppresses salicylate-mediated innate immunity of the host by disrupting the plant salicylate metabolism pathway via hydrolysis of its isochorismate precursor. This is Secreted isochorismatase effector Isc1 from Verticillium dahliae (strain VdLs.17 / ATCC MYA-4575 / FGSC 10137) (Verticillium wilt).